Consider the following 190-residue polypeptide: Large ribosomal subunit protein bL25 (190 aa).

It belongs to the bacterial ribosomal protein bL25 family. CTC subfamily. In terms of assembly, part of the 50S ribosomal subunit; part of the 5S rRNA/L5/L18/L25 subcomplex. Contacts the 5S rRNA. Binds to the 5S rRNA independently of L5 and L18.

In terms of biological role, this is one of the proteins that binds to the 5S RNA in the ribosome where it forms part of the central protuberance. This chain is Large ribosomal subunit protein bL25, found in Neisseria meningitidis serogroup A / serotype 4A (strain DSM 15465 / Z2491).